Consider the following 817-residue polypeptide: Cargo-transport protein YPP1 (817 aa).

The protein belongs to the YPP1 family. As to quaternary structure, interacts with ribosomes.

The protein localises to the cytoplasmic granule. Its subcellular location is the cell membrane. In terms of biological role, involved in endocytosis. This chain is Cargo-transport protein YPP1 (YPP1), found in Saccharomyces cerevisiae (strain ATCC 204508 / S288c) (Baker's yeast).